Consider the following 224-residue polypeptide: Fibronectin type III domain-containing protein 9 (224 aa).

Residues 1–101 enclose the Fibronectin type-III domain; that stretch reads MNIEVGNISY…FHTLDKSPLA (101 aa). A helical transmembrane segment spans residues 113-133; that stretch reads LWVLMAILLACFTAVLAFICL. The tract at residues 175–224 is disordered; it reads LQGLPLVEMPRKNSRDGAELDPEANQDAPDAGALQRGGGDPPAILPHCGE. Over residues 183–192 the composition is skewed to basic and acidic residues; sequence MPRKNSRDGA.

It localises to the membrane. This Homo sapiens (Human) protein is Fibronectin type III domain-containing protein 9 (FNDC9).